Consider the following 82-residue polypeptide: UPF0153 protein VC_1057 (82 aa).

It belongs to the UPF0153 family.

This chain is UPF0153 protein VC_1057, found in Vibrio cholerae serotype O1 (strain ATCC 39315 / El Tor Inaba N16961).